The following is a 25-amino-acid chain: Flagellar filament core protein flaB1 (25 aa).

The protein belongs to the bacterial flagellin family. As to quaternary structure, the flagellum consists of an outer layer composed of two sheath proteins, flaA1 (44 kDa) and flaA2 (35 kDa) around a core that contains three proteins flaB1 (37 kDa), flaB2 (34 kDa) and flaB3 (32 kDa).

It localises to the periplasmic flagellum. It is found in the periplasm. In terms of biological role, component of the core of the flagella. This chain is Flagellar filament core protein flaB1 (flaB1), found in Brachyspira hyodysenteriae (Treponema hyodysenteriae).